The primary structure comprises 477 residues: Argininosuccinate lyase (477 aa).

Belongs to the lyase 1 family. Argininosuccinate lyase subfamily.

It is found in the cytoplasm. It catalyses the reaction 2-(N(omega)-L-arginino)succinate = fumarate + L-arginine. It participates in amino-acid biosynthesis; L-arginine biosynthesis; L-arginine from L-ornithine and carbamoyl phosphate: step 3/3. The protein is Argininosuccinate lyase of Corynebacterium efficiens (strain DSM 44549 / YS-314 / AJ 12310 / JCM 11189 / NBRC 100395).